A 244-amino-acid chain; its full sequence is L-xylulose reductase (244 aa).

At Met-1 the chain carries N-acetylmethionine. Leu-11–Arg-39 lines the NADP(+) pocket. Arg-21 bears the Omega-N-methylarginine mark. Ser-136 contributes to the substrate binding site. The Proton acceptor role is filled by Tyr-149. Lys-153 is an active-site residue.

This sequence belongs to the short-chain dehydrogenases/reductases (SDR) family. In terms of assembly, homotetramer. Highly expressed in kidney, liver and epididymis. Expressed at intermediate level in lung. Weakly or not expressed in brain, heart, spleen and testis.

It localises to the membrane. The protein resides in the apical cell membrane. It catalyses the reaction xylitol + NADP(+) = L-xylulose + NADPH + H(+). In terms of biological role, catalyzes the NADPH-dependent reduction of several pentoses, tetroses, trioses, alpha-dicarbonyl compounds and L-xylulose. Participates in the uronate cycle of glucose metabolism. May play a role in the water absorption and cellular osmoregulation in the proximal renal tubules by producing xylitol, an osmolyte, thereby preventing osmolytic stress from occurring in the renal tubules. This is L-xylulose reductase (Dcxr) from Mus musculus (Mouse).